The sequence spans 412 residues: Argininosuccinate synthase (412 aa).

Residues 15 to 23 and alanine 42 contribute to the ATP site; that span reads AYSGGLDTS. 2 residues coordinate L-citrulline: tyrosine 93 and serine 98. Position 123 (glycine 123) interacts with ATP. L-aspartate is bound by residues threonine 125, asparagine 129, and aspartate 130. Asparagine 129 contributes to the L-citrulline binding site. The L-citrulline site is built by arginine 133, serine 185, serine 194, glutamate 270, and tyrosine 282.

It belongs to the argininosuccinate synthase family. Type 1 subfamily. As to quaternary structure, homotetramer.

Its subcellular location is the cytoplasm. It catalyses the reaction L-citrulline + L-aspartate + ATP = 2-(N(omega)-L-arginino)succinate + AMP + diphosphate + H(+). The protein operates within amino-acid biosynthesis; L-arginine biosynthesis; L-arginine from L-ornithine and carbamoyl phosphate: step 2/3. The chain is Argininosuccinate synthase from Psychrobacter cryohalolentis (strain ATCC BAA-1226 / DSM 17306 / VKM B-2378 / K5).